A 61-amino-acid polypeptide reads, in one-letter code: Probable tautomerase LL0574 (61 aa).

Pro2 (proton acceptor; via imino nitrogen) is an active-site residue.

This sequence belongs to the 4-oxalocrotonate tautomerase family.

This Lactococcus lactis subsp. lactis (strain IL1403) (Streptococcus lactis) protein is Probable tautomerase LL0574.